A 209-amino-acid chain; its full sequence is Uracil phosphoribosyltransferase (209 aa).

Residues Arg79, Arg104, and 131 to 139 (DPMLATGGS) each bind 5-phospho-alpha-D-ribose 1-diphosphate. Uracil-binding positions include Ile194 and 199-201 (GDA). Asp200 is a binding site for 5-phospho-alpha-D-ribose 1-diphosphate.

Belongs to the UPRTase family. The cofactor is Mg(2+).

It carries out the reaction UMP + diphosphate = 5-phospho-alpha-D-ribose 1-diphosphate + uracil. It functions in the pathway pyrimidine metabolism; UMP biosynthesis via salvage pathway; UMP from uracil: step 1/1. Allosterically activated by GTP. Functionally, catalyzes the conversion of uracil and 5-phospho-alpha-D-ribose 1-diphosphate (PRPP) to UMP and diphosphate. The sequence is that of Uracil phosphoribosyltransferase from Geobacter sulfurreducens (strain ATCC 51573 / DSM 12127 / PCA).